The following is a 479-amino-acid chain: ATP synthase subunit beta (479 aa).

168–175 contacts ATP; the sequence is GGAGVGKT.

It belongs to the ATPase alpha/beta chains family. In terms of assembly, F-type ATPases have 2 components, CF(1) - the catalytic core - and CF(0) - the membrane proton channel. CF(1) has five subunits: alpha(3), beta(3), gamma(1), delta(1), epsilon(1). CF(0) has three main subunits: a(1), b(2) and c(9-12). The alpha and beta chains form an alternating ring which encloses part of the gamma chain. CF(1) is attached to CF(0) by a central stalk formed by the gamma and epsilon chains, while a peripheral stalk is formed by the delta and b chains.

It is found in the cell membrane. It carries out the reaction ATP + H2O + 4 H(+)(in) = ADP + phosphate + 5 H(+)(out). Produces ATP from ADP in the presence of a proton gradient across the membrane. The catalytic sites are hosted primarily by the beta subunits. In Frankia casuarinae (strain DSM 45818 / CECT 9043 / HFP020203 / CcI3), this protein is ATP synthase subunit beta.